The sequence spans 201 residues: dCTP deaminase, dUMP-forming (201 aa).

DCTP contacts are provided by residues 101–106 (KSSLGR), D119, 127–129 (TLE), Q148, Y162, and Q174. E129 (proton donor/acceptor) is an active-site residue. Residues 166-183 (EYSSRYQGQRGPTASRSF) show a composition bias toward polar residues. The disordered stretch occupies residues 166 to 201 (EYSSRYQGQRGPTASRSFLNFHRTDVSGTEAGRSSS).

It belongs to the dCTP deaminase family. As to quaternary structure, homotrimer.

The catalysed reaction is dCTP + 2 H2O = dUMP + NH4(+) + diphosphate. Its pathway is pyrimidine metabolism; dUMP biosynthesis; dUMP from dCTP: step 1/1. Functionally, bifunctional enzyme that catalyzes both the deamination of dCTP to dUTP and the hydrolysis of dUTP to dUMP without releasing the toxic dUTP intermediate. The polypeptide is dCTP deaminase, dUMP-forming (Leifsonia xyli subsp. xyli (strain CTCB07)).